Here is a 170-residue protein sequence, read N- to C-terminus: Small ribosomal subunit protein uS3mA (170 aa).

A mitochondrion-targeting transit peptide spans 1–30; the sequence is MAAPVMSALGRLQGLIRTERSLLTHVQSRC.

The protein belongs to the universal ribosomal protein uS3 family. In terms of assembly, component of the mitochondrial ribosome small subunit (28S) which comprises a 12S rRNA and about 30 distinct proteins.

Its subcellular location is the mitochondrion. The sequence is that of Small ribosomal subunit protein uS3mA (mrps24-a) from Xenopus laevis (African clawed frog).